The following is a 185-amino-acid chain: Flavodoxin (185 aa).

The Flavodoxin-like domain occupies 4-159 (VLVIYDTRTG…ACRRLGRRLA (156 aa)).

The protein belongs to the flavodoxin family. FMN is required as a cofactor.

Functionally, low-potential electron donor to a number of redox enzymes. This is Flavodoxin (fldA) from Aquifex aeolicus (strain VF5).